The primary structure comprises 256 residues: Phosphonates import ATP-binding protein PhnC (256 aa).

In terms of domain architecture, ABC transporter spans 5–253 (LRITGLVKEY…MLKTIYGGES (249 aa)). 38-45 (GPSGTGKS) is an ATP binding site.

It belongs to the ABC transporter superfamily. Phosphonates importer (TC 3.A.1.9.1) family. As to quaternary structure, the complex is composed of two ATP-binding proteins (PhnC), two transmembrane proteins (PhnE) and a solute-binding protein (PhnD).

The protein localises to the cell inner membrane. The catalysed reaction is phosphonate(out) + ATP + H2O = phosphonate(in) + ADP + phosphate + H(+). Functionally, part of the ABC transporter complex PhnCDE involved in phosphonates import. Responsible for energy coupling to the transport system. This chain is Phosphonates import ATP-binding protein PhnC, found in Bordetella parapertussis (strain 12822 / ATCC BAA-587 / NCTC 13253).